The sequence spans 479 residues: Catalase A (479 aa).

A compositionally biased stretch (polar residues) spans 1–21 (MSKILTTASGAPVADNQNSRS). The segment at 1–25 (MSKILTTASGAPVADNQNSRSAGPR) is disordered. Catalysis depends on residues His-53 and Asn-126. Tyr-336 provides a ligand contact to heme. The interval 350 to 376 (QLPVNAPRCPVNSYQRDGSMATGSYGS) is disordered. Polar residues predominate over residues 361-376 (NSYQRDGSMATGSYGS).

It belongs to the catalase family. The cofactor is heme.

It carries out the reaction 2 H2O2 = O2 + 2 H2O. Activated by peroxide. In terms of biological role, the major expressed catalase protein in strain Corvallis in stationary phase. Decomposes hydrogen peroxide into water and oxygen; serves to protect cells from the toxic effects of hydrogen peroxide. The protein is Catalase A (katA) of Pseudomonas putida (Arthrobacter siderocapsulatus).